Reading from the N-terminus, the 58-residue chain is Small ribosomal subunit protein bS21 (58 aa).

The disordered stretch occupies residues 37–58 (FYEKPSVKRKKKSEAARKRKKF). The segment covering 43-58 (VKRKKKSEAARKRKKF) has biased composition (basic residues).

The protein belongs to the bacterial ribosomal protein bS21 family.

This is Small ribosomal subunit protein bS21 from Enterococcus faecalis (strain ATCC 700802 / V583).